A 1503-amino-acid polypeptide reads, in one-letter code: Mitogen-activated protein kinase-binding protein 1 (1503 aa).

WD repeat units lie at residues 89–130 (SSRK…QVAE), 133–174 (EHKY…VVAS), 176–214 (KVSSRVTAVSFSEDCSYFVTAGNRHIKFWYLDDSKTSKV), 271–310 (VELRTTVAHCISVTQEYIFCGCADGTVRLFNPSNLHFLST), 337–376 (ARYPDTIALTFDPTNQWLSCVYNDHSIYVWDVRDPKKVGK), 382–431 (YHSS…VHGS), 472–511 (DPRVGIRSVCISPNGQHLASGDRMGTLRIHELQSLSEMLK), 514–556 (AHDS…SLQQ), 560–601 (EHSS…EGVQ), 609–648 (VRKTTLYDMDVEPSWKYTAIGCQDRNIRIFNISSGKQKKL), 654–693 (GEDGTLIKVQTDPSGIYIATSCSDKNLSIFDFSSGECVAT), and 696–735 (GHSEIVTGMKFSNDCKHLISVSGDSCIFVWRLSSEMTISM). Disordered regions lie at residues 745 to 817 (RQRG…SSPA), 874 to 917 (LAPS…RLQT), and 951 to 1176 (VYPE…SWAS). Residues 784 to 796 (KEGEDEGTEEEEL) show a composition bias toward acidic residues. Composition is skewed to polar residues over residues 905-917 (CVSQNERAPRLQT) and 957-972 (DSPTMDTSAFQVQAPT). Residues 1028–1043 (DLEEPAEGDEDEEEEG) are compositionally biased toward acidic residues. Over residues 1058–1068 (PDQEQFLKQHF) the composition is skewed to basic and acidic residues. The span at 1089–1129 (SQSISSRFLLQVQTSPLREPSLSSSGLALTSRPDQVSQVSG) shows a compositional bias: polar residues. Residue Ser1193 is modified to Phosphoserine. Disordered stretches follow at residues 1217 to 1238 (QGSLGSLPQAGGCSSQPHSYQN) and 1369 to 1391 (QGPESLQPLSPEKTRNPVESSRP).

As to quaternary structure, can form homodimers (via C-terminus). Interacts (via C-terminus) with WDR62 (via C-terminus). Interacts with MAPK9. Interacts (via N-terminus) with NOD2; the interaction is enhanced in presence of muramyl dipeptide (MDP). Interacts with MAPK10. In terms of tissue distribution, ubiquitously expressed. Highest expression observed in brain.

It localises to the cytoplasm. Its subcellular location is the nucleus. The protein resides in the cytoskeleton. The protein localises to the spindle pole. Its function is as follows. Negative regulator of NOD2 function. It down-regulates NOD2-induced processes such as activation of NF-kappa-B signaling, IL8 secretion and antibacterial response. Involved in JNK signaling pathway. This Mus musculus (Mouse) protein is Mitogen-activated protein kinase-binding protein 1 (Mapkbp1).